Here is a 127-residue protein sequence, read N- to C-terminus: Anti-adapter protein IraD (127 aa).

The protein belongs to the GpW/Gp25 family. IraD subfamily. In terms of assembly, interacts with RssB.

It is found in the cytoplasm. In terms of biological role, inhibits RpoS proteolysis by regulating RssB activity, thereby increasing the stability of the sigma stress factor RpoS during oxidative stress. Its effect on RpoS stability is due to its interaction with RssB, which probably blocks the interaction of RssB with RpoS, and the consequent delivery of the RssB-RpoS complex to the ClpXP protein degradation pathway. The chain is Anti-adapter protein IraD from Escherichia coli O6:H1 (strain CFT073 / ATCC 700928 / UPEC).